The chain runs to 206 residues: Small ribosomal subunit protein uS4 (206 aa).

One can recognise an S4 RNA-binding domain in the interval 96 to 156 (QRLDNVVYRM…EKAKKQARIV (61 aa)).

The protein belongs to the universal ribosomal protein uS4 family. Part of the 30S ribosomal subunit. Contacts protein S5. The interaction surface between S4 and S5 is involved in control of translational fidelity.

Functionally, one of the primary rRNA binding proteins, it binds directly to 16S rRNA where it nucleates assembly of the body of the 30S subunit. Its function is as follows. With S5 and S12 plays an important role in translational accuracy. This is Small ribosomal subunit protein uS4 from Alteromonas mediterranea (strain DSM 17117 / CIP 110805 / LMG 28347 / Deep ecotype).